A 245-amino-acid polypeptide reads, in one-letter code: MKQVDLNADLAEGCGSDEALLQLITSANIACAQHAGSIADIRAALAYAQQNGVRIGAHPGYPDRENFGRTEMNLSEADLRACLNYQLGALQALCRDQGLEMAYVKPHGAMYNQAAKNRALADTVARIVADFDPKLKLMALSGSLLLEAGKAAGLGVISEVFADRRYMPDGTLVPRSRPDAQVDSDEEAIAQVLQMVRDGQVKAVDGSLVAVQADSICLHGDGPHAVVFAEKIRQELLAAGIKVSA.

This sequence belongs to the LamB/PxpA family. Forms a complex composed of PxpA, PxpB and PxpC.

The catalysed reaction is 5-oxo-L-proline + ATP + 2 H2O = L-glutamate + ADP + phosphate + H(+). Its function is as follows. Catalyzes the cleavage of 5-oxoproline to form L-glutamate coupled to the hydrolysis of ATP to ADP and inorganic phosphate. This chain is 5-oxoprolinase subunit A, found in Neisseria meningitidis serogroup A / serotype 4A (strain DSM 15465 / Z2491).